Here is a 146-residue protein sequence, read N- to C-terminus: Hemoglobin subunit beta-1/2 (146 aa).

Residues 2-146 (EWTDKERSII…VVSALGKQYH (145 aa)) enclose the Globin domain. 2 residues coordinate heme b: H63 and H92.

It belongs to the globin family. As to quaternary structure, hb1 is a heterotetramer of two alpha-1 chains and two beta chains. Hb2 is a heterotetramer of two alpha-2 chains and two beta chains. Red blood cells.

Functionally, involved in oxygen transport from gills to the various peripheral tissues. This Trematomus newnesi (Dusky notothen) protein is Hemoglobin subunit beta-1/2.